A 371-amino-acid chain; its full sequence is 3-isopropylmalate dehydrogenase (371 aa).

4 residues coordinate substrate: R104, R114, R142, and D232. Residues D232, D256, and D260 each contribute to the Mg(2+) site. NAD(+) is bound at residue G290–N302.

It belongs to the isocitrate and isopropylmalate dehydrogenases family. LeuB type 1 subfamily. As to quaternary structure, homodimer. Mg(2+) serves as cofactor. The cofactor is Mn(2+).

It is found in the cytoplasm. The catalysed reaction is (2R,3S)-3-isopropylmalate + NAD(+) = 4-methyl-2-oxopentanoate + CO2 + NADH. It functions in the pathway amino-acid biosynthesis; L-leucine biosynthesis; L-leucine from 3-methyl-2-oxobutanoate: step 3/4. Functionally, catalyzes the oxidation of 3-carboxy-2-hydroxy-4-methylpentanoate (3-isopropylmalate) to 3-carboxy-4-methyl-2-oxopentanoate. The product decarboxylates to 4-methyl-2 oxopentanoate. This is 3-isopropylmalate dehydrogenase from Synechococcus sp. (strain JA-2-3B'a(2-13)) (Cyanobacteria bacterium Yellowstone B-Prime).